The sequence spans 275 residues: 3-methyl-2-oxobutanoate hydroxymethyltransferase (275 aa).

2 residues coordinate Mg(2+): Asp-44 and Asp-83. 3-methyl-2-oxobutanoate contacts are provided by residues 44–45 (DS), Asp-83, and Lys-113. Glu-115 is a Mg(2+) binding site. Glu-182 (proton acceptor) is an active-site residue.

The protein belongs to the PanB family. Homodecamer; pentamer of dimers. It depends on Mg(2+) as a cofactor.

The protein localises to the cytoplasm. It carries out the reaction 3-methyl-2-oxobutanoate + (6R)-5,10-methylene-5,6,7,8-tetrahydrofolate + H2O = 2-dehydropantoate + (6S)-5,6,7,8-tetrahydrofolate. It participates in cofactor biosynthesis; (R)-pantothenate biosynthesis; (R)-pantoate from 3-methyl-2-oxobutanoate: step 1/2. Catalyzes the reversible reaction in which hydroxymethyl group from 5,10-methylenetetrahydrofolate is transferred onto alpha-ketoisovalerate to form ketopantoate. This Clostridium botulinum (strain Loch Maree / Type A3) protein is 3-methyl-2-oxobutanoate hydroxymethyltransferase.